Consider the following 789-residue polypeptide: Fibrinogen alpha chain (789 aa).

The first 19 residues, 1–19 (MLSLRVTCLILSVASTVWT), serve as a signal peptide directing secretion. The residue at position 46 (Ser-46) is a Phosphoserine. Residues 69 to 554 (CRMKGLIDEA…GRARARPTRD (486 aa)) are a coiled coil. Composition is skewed to basic and acidic residues over residues 263 to 287 (ERPG…RGDF) and 384 to 396 (KGDK…KEKV). The tract at residues 263–420 (ERPGKDGGSR…TITKTVTGPD (158 aa)) is disordered. Residues 397 to 416 (TSSGTSTTHRSCSKTITKTV) are compositionally biased toward polar residues. A disulfide bond links Cys-408 and Cys-438. Ser-447 is modified (phosphoserine). Pro-504 bears the 4-hydroxyproline; by P4HA1 mark. A compositionally biased stretch (basic and acidic residues) spans 526 to 541 (ADEAGSEAHREGETRN). Residues 526-555 (ADEAGSEAHREGETRNTKRGRARARPTRDC) are disordered. In terms of domain architecture, Fibrinogen C-terminal spans 546 to 787 (RARARPTRDC…AVRMKIRPLV (242 aa)). The N-linked (GlcNAc...) asparagine glycan is linked to Asn-609. Ca(2+) contacts are provided by Asp-714, Asp-716, Trp-718, and Glu-720. An intrachain disulfide couples Cys-722 to Cys-735.

In terms of assembly, heterohexamer; disulfide linked. Contains 2 sets of 3 non-identical chains (alpha, beta and gamma). The 2 heterotrimers are in head to head conformation with the N-termini in a small central domain. Conversion of fibrinogen to fibrin is triggered by thrombin, which cleaves fibrinopeptides A and B from alpha and beta chains, and thus exposes the N-terminal polymerization sites responsible for the formation of the soft clot. The soft clot is converted into the hard clot by factor XIIIA which catalyzes the epsilon-(gamma-glutamyl)lysine cross-linking between gamma chains (stronger) and between alpha chains (weaker) of different monomers. In terms of processing, forms F13A-mediated cross-links between a glutamine and the epsilon-amino group of a lysine residue, forming fibronectin-fibrinogen heteropolymers. Post-translationally, phosphorylated by FAM20C in the extracellular medium. As to expression, expressed in liver.

It is found in the secreted. In terms of biological role, cleaved by the protease thrombin to yield monomers which, together with fibrinogen beta (FGB) and fibrinogen gamma (FGG), polymerize to form an insoluble fibrin matrix. Fibrin has a major function in hemostasis as one of the primary components of blood clots. In addition, functions during the early stages of wound repair to stabilize the lesion and guide cell migration during re-epithelialization. Was originally thought to be essential for platelet aggregation, based on in vitro studies using anticoagulated blood. However, subsequent studies have shown that it is not absolutely required for thrombus formation in vivo. Enhances expression of SELP in activated platelets via an ITGB3-dependent pathway. Maternal fibrinogen is essential for successful pregnancy. Fibrin deposition is also associated with infection, where it protects against IFNG-mediated hemorrhage. May also facilitate the immune response via both innate and T-cell mediated pathways. This is Fibrinogen alpha chain from Mus musculus (Mouse).